The following is a 513-amino-acid chain: ATP synthase subunit alpha (513 aa).

ATP is bound at residue 169 to 176 (GDRQTGKT).

It belongs to the ATPase alpha/beta chains family. In terms of assembly, F-type ATPases have 2 components, CF(1) - the catalytic core - and CF(0) - the membrane proton channel. CF(1) has five subunits: alpha(3), beta(3), gamma(1), delta(1), epsilon(1). CF(0) has three main subunits: a(1), b(2) and c(9-12). The alpha and beta chains form an alternating ring which encloses part of the gamma chain. CF(1) is attached to CF(0) by a central stalk formed by the gamma and epsilon chains, while a peripheral stalk is formed by the delta and b chains.

The protein resides in the cell membrane. The catalysed reaction is ATP + H2O + 4 H(+)(in) = ADP + phosphate + 5 H(+)(out). Its function is as follows. Produces ATP from ADP in the presence of a proton gradient across the membrane. The alpha chain is a regulatory subunit. The protein is ATP synthase subunit alpha of Polynucleobacter asymbioticus (strain DSM 18221 / CIP 109841 / QLW-P1DMWA-1) (Polynucleobacter necessarius subsp. asymbioticus).